A 355-amino-acid polypeptide reads, in one-letter code: Serum paraoxonase/arylesterase 1 (355 aa).

Cysteine 42 and cysteine 353 are oxidised to a cystine. Ca(2+) contacts are provided by glutamate 53 and aspartate 54. Histidine 115 functions as the Proton acceptor in the catalytic mechanism. Positions 117, 168, 169, and 224 each coordinate Ca(2+). Asparagine 253 carries an N-linked (GlcNAc...) asparagine glycan. Residues aspartate 269 and asparagine 270 each contribute to the Ca(2+) site. N-linked (GlcNAc...) asparagine glycans are attached at residues asparagine 270 and asparagine 324.

It belongs to the paraoxonase family. Homodimer. Interacts with CLU. It depends on Ca(2+) as a cofactor. Glycosylated. In terms of processing, the signal sequence is not cleaved. As to expression, plasma. Associated with HDL.

Its subcellular location is the secreted. The protein localises to the extracellular space. It catalyses the reaction a phenyl acetate + H2O = a phenol + acetate + H(+). The catalysed reaction is An aryl dialkyl phosphate + H2O = dialkyl phosphate + an aryl alcohol.. It carries out the reaction an N-acyl-L-homoserine lactone + H2O = an N-acyl-L-homoserine + H(+). In terms of biological role, hydrolyzes the toxic metabolites of a variety of organophosphorus insecticides. Capable of hydrolyzing a broad spectrum of organophosphate substrates and lactones, and a number of aromatic carboxylic acid esters. Mediates an enzymatic protection of low density lipoproteins against oxidative modification. The sequence is that of Serum paraoxonase/arylesterase 1 (Pon1) from Rattus norvegicus (Rat).